The following is a 447-amino-acid chain: Tetratricopeptide repeat protein 23 (447 aa).

TPR repeat units follow at residues leucine 45–cysteine 78, isoleucine 137–leucine 170, alanine 186–serine 219, and alanine 356–leucine 389.

In terms of assembly, found Associated with the EvC complex composed of EFCAB7, IQCE, EVC2 and EVC.

Its subcellular location is the cell projection. It localises to the cilium. Its function is as follows. Participates positively in the ciliary Hedgehog (Hh) signaling. The protein is Tetratricopeptide repeat protein 23 (TTC23) of Homo sapiens (Human).